A 252-amino-acid polypeptide reads, in one-letter code: 14-3-3-like protein GF14 omicron (252 aa).

Ser65 and Ser188 each carry phosphoserine.

Belongs to the 14-3-3 family.

It localises to the nucleus. Its subcellular location is the cytoplasm. In terms of biological role, is associated with a DNA binding complex that binds to the G box, a well-characterized cis-acting DNA regulatory element found in plant genes. The chain is 14-3-3-like protein GF14 omicron (GRF11) from Arabidopsis thaliana (Mouse-ear cress).